A 399-amino-acid polypeptide reads, in one-letter code: Elongation factor Tu (399 aa).

A tr-type G domain is found at 10 to 204 (KPHVNIGTIG…AVDTSIPEPE (195 aa)). Positions 19–26 (GHVDHGKT) are G1. 19 to 26 (GHVDHGKT) contacts GTP. Position 26 (Thr26) interacts with Mg(2+). Positions 60 to 64 (GITIN) are G2. Residues 81-84 (DCPG) are G3. GTP is bound by residues 81-85 (DCPGH) and 136-139 (NKCD). The segment at 136–139 (NKCD) is G4. The G5 stretch occupies residues 174-176 (SGL).

The protein belongs to the TRAFAC class translation factor GTPase superfamily. Classic translation factor GTPase family. EF-Tu/EF-1A subfamily. In terms of assembly, monomer.

Its subcellular location is the cytoplasm. The enzyme catalyses GTP + H2O = GDP + phosphate + H(+). GTP hydrolase that promotes the GTP-dependent binding of aminoacyl-tRNA to the A-site of ribosomes during protein biosynthesis. The protein is Elongation factor Tu of Prochlorococcus marinus (strain MIT 9303).